We begin with the raw amino-acid sequence, 167 residues long: Centrin-3 (167 aa).

EF-hand domains lie at 25–60 (EQKQEIKDAFELFDTDKDEAIDYHELKVAMRALGFD), 61–96 (VKKADVLKILKDYDREATGKITFEDFNEVVTDWILE), 98–133 (DPHEEILKAFKLFDDDDSGKISLRNLRRVARELGEN), and 134–167 (MSDEELRAMIEEFDKDGDGEINQEEFIAIMTGDI). The residue at position 135 (Ser135) is a Phosphoserine. Residues Asp147, Asp149, Asp151, Glu153, and Glu158 each contribute to the Ca(2+) site.

It belongs to the centrin family. Monomer. Component of the nuclear pore complex (NPC)-associated TREX-2 complex (transcription and export complex 2), composed of at least GANP, 2 copies of ENY2, PCID2, SEM1/DSS1, and either centrin CETN2 or centrin CETN3. The TREX-2 complex also associates with ALYREF/ALY and with the nucleoporin NUP153. Interacts with USP49.

It is found in the cytoplasm. The protein resides in the cytoskeleton. The protein localises to the microtubule organizing center. It localises to the centrosome. Its subcellular location is the nucleus. It is found in the nucleolus. The protein resides in the nucleus envelope. The protein localises to the nuclear pore complex. It localises to the centriole. Its function is as follows. Plays a fundamental role in microtubule-organizing center structure and function. In terms of biological role, as a component of the TREX-2 complex, involved in the export of mRNAs to the cytoplasm through the nuclear pores. This Homo sapiens (Human) protein is Centrin-3 (CETN3).